A 1165-amino-acid chain; its full sequence is Integrin alpha-L (1165 aa).

The signal sequence occupies residues methionine 1–serine 23. Residues tyrosine 24 to glutamate 1084 are Extracellular-facing. FG-GAP repeat units follow at residues arginine 29–proline 80 and valine 81–leucine 138. Asparagine 33 carries N-linked (GlcNAc...) asparagine glycosylation. An intrachain disulfide couples cysteine 71 to cysteine 78. Asparagine 86 carries an N-linked (GlcNAc...) asparagine glycan. Cysteine 108 and cysteine 126 are oxidised to a cystine. The VWFA domain occupies aspartate 153–leucine 324. A glycan (N-linked (GlcNAc...) asparagine) is linked at asparagine 185. FG-GAP repeat units follow at residues serine 335–phenylalanine 386, valine 387–tryptophan 442, serine 443–methionine 503, valine 504–proline 560, and glutamine 564–alanine 624. The Ca(2+) site is built by aspartate 465, aspartate 467, aspartate 469, glutamate 473, aspartate 527, asparagine 529, aspartate 531, aspartate 535, aspartate 587, aspartate 591, and aspartate 595. Asparagine 646, asparagine 667, and asparagine 723 each carry an N-linked (GlcNAc...) asparagine glycan. A disulfide bond links cysteine 650 and cysteine 704. Disulfide bonds link cysteine 768–cysteine 774 and cysteine 842–cysteine 858. 3 N-linked (GlcNAc...) asparagine glycosylation sites follow: asparagine 859, asparagine 894, and asparagine 929. 2 disulfide bridges follow: cysteine 994–cysteine 1009 and cysteine 1017–cysteine 1048. N-linked (GlcNAc...) asparagine glycans are attached at residues asparagine 1056 and asparagine 1067. The helical transmembrane segment at methionine 1085–isoleucine 1105 threads the bilayer. Topologically, residues alanine 1106–aspartate 1165 are cytoplasmic. Residues glycine 1111 to arginine 1115 carry the GFFKR motif motif. The disordered stretch occupies residues alanine 1123 to aspartate 1165. Basic and acidic residues predominate over residues glutamate 1140 to glutamate 1159.

It belongs to the integrin alpha chain family. Heterodimer of an alpha and a beta subunit. The ITGAL alpha subunit associates with the ITGB2 beta subunit. Interacts with THBD. Interacts with CD226. In resting T-cells, up to 40% of surface ITGAL is constitutively phosphorylated. Phosphorylation causes conformational changes needed for ligand binding and is necessary for the activation by some physiological agents.

The protein resides in the cell membrane. Functionally, integrin ITGAL/ITGB2 is a receptor for ICAM1, ICAM2, ICAM3 and ICAM4. Integrin ITGAL/ITGB2 is a receptor for F11R. Integrin ITGAL/ITGB2 is a receptor for the secreted form of ubiquitin-like protein ISG15; the interaction is mediated by ITGAL. Involved in a variety of immune phenomena including leukocyte-endothelial cell interaction, cytotoxic T-cell mediated killing, and antibody dependent killing by granulocytes and monocytes. Contributes to natural killer cell cytotoxicity. Involved in leukocyte adhesion and transmigration of leukocytes including T-cells and neutrophils. Acts as a platform at the immunological synapse to translate TCR engagement and density of the ITGAL ligand ICAM1 into graded adhesion. Required for generation of common lymphoid progenitor cells in bone marrow, indicating the role in lymphopoiesis. Integrin ITGAL/ITGB2 in association with ICAM3, contributes to apoptotic neutrophil phagocytosis by macrophages. The protein is Integrin alpha-L of Bos taurus (Bovine).